Here is a 476-residue protein sequence, read N- to C-terminus: MKIMFVAAEGAPFAKTGGLGDVIGALPKSLVKNGHEVSVILPYYDVVDQAFGQQVEDVLYFYTQVGWRRQYVGIKKLVKDKVTFYFIDNQGYFFRGRIYGDWDDGERFAYFQLAAIEAMEKIGVIPDILHVHDYHTAMIPFLLKEKYHWIQAYQAIRTVFTIHNIAFQGQFDPGMLGDLFDVGIERYEDGTLRWHDCLNWMKAAVLYADRVTTVSPSYAHEIQTPAFGQGLDQVMRMEAGKLSGIVNGIDTDLFNPARDPHLPASFSAEDLSGKAATKQALQERLGLPVRADVPLIGMVSRLTDQKGFQLVLEELPHILQQDVQLVLLGTGDPDYEAAFSWFAKAYPEKLSANITFDLPLAQQIYGACDLFLMPSAFEPCGLSQMMAMRYGAIPIVHEIGGLKDTVASYNAYEKTGTGFGFDQFSGFWLTQTLLFALDIYHNHKEDWQTIQQHAMTKDFSWDTASLAYLDLYKSLL.

Position 15 (lysine 15) interacts with ADP-alpha-D-glucose.

This sequence belongs to the glycosyltransferase 1 family. Bacterial/plant glycogen synthase subfamily.

The catalysed reaction is [(1-&gt;4)-alpha-D-glucosyl](n) + ADP-alpha-D-glucose = [(1-&gt;4)-alpha-D-glucosyl](n+1) + ADP + H(+). It functions in the pathway glycan biosynthesis; glycogen biosynthesis. In terms of biological role, synthesizes alpha-1,4-glucan chains using ADP-glucose. This Streptococcus equi subsp. equi (strain 4047) protein is Glycogen synthase.